The chain runs to 1031 residues: uncharacterized protein (1031 aa).

The SWIM-type zinc finger occupies 50 to 85 (FKVQINLKTAAAHLDCSCSNDKQNCVHIIAALLKYN). Residues 590 to 751 (RALEDNQFGG…WSCFDFVLPN (162 aa)) form the Helicase ATP-binding domain. 603–610 (DEMGLGKT) is a binding site for ATP. The short motif at 702 to 705 (DEAQ) is the DEAQ box element. In terms of domain architecture, Helicase C-terminal spans 868–1022 (ALNIIYEALE…EDVNFFKSLS (155 aa)).

It belongs to the SNF2/RAD54 helicase family.

This is an uncharacterized protein from Mycoplasma genitalium (strain ATCC 33530 / DSM 19775 / NCTC 10195 / G37) (Mycoplasmoides genitalium).